The chain runs to 856 residues: Centrosomal protein of 97 kDa (856 aa).

8 LRR repeats span residues 37–58 (DVHT…EKCK), 59–80 (QLIQ…AKLT), 81–102 (QLRV…KDLV), 103–124 (HLEW…NSCT), 125–146 (ALQH…SKLI), 147–168 (SLKT…PAYL), 171–192 (NLSI…SFLA), and 196–205 (ELEQLSIMNN). Residues 211 to 249 (TPSIPGFDYRPFIVSWCLNLRVLDGYVISQKESLKAEWL) form the LRRCT domain. The segment at 300–742 (HQRQLMSQSQ…KCVKDRDSEA (443 aa)) is CCP110-binding. 2 positions are modified to phosphoserine: Ser-308 and Ser-410. The tract at residues 430-451 (DDGADEFTKGLENQDEDKDKEK) is disordered. Ser-497 is subject to Phosphoserine. Residues 498–513 (LTSLPESAGHSASRTE) show a composition bias toward polar residues. The segment at 498-525 (LTSLPESAGHSASRTEANSEEAMSPATS) is disordered. Ser-521 is modified (phosphoserine). The residue at position 534 (Thr-534) is a Phosphothreonine. One can recognise an IQ domain in the interval 550–579 (LNAAATKLQACWRGFYTRNYNQQAKGVRYE). The interaction with MPHOSPH9 stretch occupies residues 579–853 (EIRLRRMQEH…FQGLHVGVTV (275 aa)). Disordered regions lie at residues 646–672 (PPIS…DQSS) and 737–840 (DRDS…PPEC). Residues 737 to 752 (DRDSEATAEEHSDCSR) are compositionally biased toward basic and acidic residues. The segment covering 753–773 (ESSASEQDNTLLQQYLTSVQQ) has biased composition (polar residues). At Ser-755 the chain carries Phosphoserine. The segment covering 776–787 (DAAEAADSDDVA) has biased composition (acidic residues). Over residues 799–811 (ERFDASSDSETHR) the composition is skewed to basic and acidic residues. A compositionally biased stretch (polar residues) spans 812 to 833 (VASTSQDEISQTPENCQLNEEA).

As to quaternary structure, interacts with CALM1, CEP76, KIF24 and TALPID3. Interacts with CCP110. ENKD1 competes with CEP97 for binding to CCP110, destabilizing the interaction between CP110 and CEP97 which promotes the removal of CCP110 and CEP97 from the mother centriole and allows the initiation of ciliogenesis. Via its interaction with CCP110, may indirectly interact with HERC2 and NEURL4. Interacts with MPHOSPH9.

Its subcellular location is the cytoplasm. It is found in the cytoskeleton. It localises to the microtubule organizing center. The protein localises to the centrosome. The protein resides in the centriole. Acts as a key negative regulator of ciliogenesis in collaboration with CCP110 by capping the mother centriole thereby preventing cilia formation. Required for recruitment of CCP110 to the centrosome. This Mus musculus (Mouse) protein is Centrosomal protein of 97 kDa (Cep97).